A 631-amino-acid chain; its full sequence is Mitochondrial Rho GTPase 1 (631 aa).

Over 1–605 (MPAGRGRPLR…TQADLKSSTF (605 aa)) the chain is Cytoplasmic. One can recognise a Miro 1 domain in the interval 15–181 (KKDVRILLVG…FYYAQKAVLH (167 aa)). Residues arginine 27, glycine 29, lysine 30, threonine 31, and serine 32 each coordinate GTP. Residue threonine 31 coordinates Mg(2+). 2 residues coordinate Mg(2+): proline 48 and aspartate 70. Serine 72 is a binding site for GTP. Lysine 105 carries the post-translational modification N6-acetyllysine. GTP contacts are provided by asparagine 131, lysine 132, aspartate 134, alanine 162, and lysine 163. Residue lysine 166 forms a Glycyl lysine isopeptide (Lys-Gly) (interchain with G-Cter in ubiquitin) linkage. An EF-hand 1 domain is found at 197–232 (ACIKALTRIFKISDQDNDGTLNDAELNFFQRICFNT). Positions 210, 212, 214, 216, and 221 each coordinate Ca(2+). A Glycyl lysine isopeptide (Lys-Gly) (interchain with G-Cter in ubiquitin) cross-link involves residue lysine 248. The region spanning 317–352 (HAYLFLQSTFDKHDLDRDCALSPDELKDLFKVFPYI) is the EF-hand 2 domain. Positions 330, 332, 334, 336, and 341 each coordinate Ca(2+). The region spanning 429–592 (RNVFRCNVIG…FVKLTTMAMY (164 aa)) is the Miro 2 domain. Positions 441, 442, 443, 444, 445, 446, 460, 541, 543, 571, and 572 each coordinate GTP. Asparagine 441 serves as a coordination point for Mg(2+). A Glycyl lysine isopeptide (Lys-Gly) (interchain with G-Cter in ubiquitin) cross-link involves residue lysine 585. The helical; Anchor for type IV membrane protein transmembrane segment at 606–628 (WLRASFGATVFAVLGFAMYKALL) threads the bilayer. Topologically, residues 629–631 (KQR) are mitochondrial intermembrane.

It belongs to the mitochondrial Rho GTPase family. In terms of assembly, homodimer. Interacts with the kinesin-binding proteins TRAK1/OIP106 and TRAK2/GRIF1, forming a link between mitochondria and the trafficking apparatus of the microtubules. Interacts with RAP1GDS1. Interacts with ARMCX1. Found in a complex with KIF5B, OGT, RHOT2 and TRAK1. Post-translationally, ubiquitinated by PRKN during mitophagy, leading to its degradation and enhancement of mitophagy. Deubiquitinated by USP30. Acetylation on Lys-105 decreases sensitivity of mitochondrial transport to elevated Ca(2+) levels, increases mitochondrial transport and promotes axon growth. Deacetylated by HDAC6 which blocks mitochondrial transport and mediates axon growth inhibition.

The protein resides in the mitochondrion outer membrane. The enzyme catalyses GTP + H2O = GDP + phosphate + H(+). It carries out the reaction ATP + H2O = ADP + phosphate + H(+). It catalyses the reaction UTP + H2O = UDP + phosphate + H(+). Its function is as follows. Atypical mitochondrial nucleoside-triphosphatase (NTPase) involved in mitochondrial trafficking. Probably involved in control of anterograde transport of mitochondria and their subcellular distribution. Promotes mitochondrial fission during high calcium conditions. Can hydrolyze GTP, ATP and UTP. The protein is Mitochondrial Rho GTPase 1 (RHOT1) of Bos taurus (Bovine).